A 218-amino-acid polypeptide reads, in one-letter code: MANQEIFDKLTNAIATQNVAGCAQLAQEALDAGISPLDIITKGLSPGMKIIGDKFEAAEVFLPQIMMSAKAMEAAMKVLTPELEKTKVEGEEGTGLAITFVAEGDIHDIGHRLVTTMLGANGFDILDLGTDVLNETVVEEAAKHKGEKVLLVGSALMTTSMLGQKDLMDRLREENLRDSVKCMFGGAPVSSKWIDEIGADATAENAAEAAKVALNIMK.

One can recognise a B12-binding N-terminal domain in the interval 1–91 (MANQEIFDKL…ELEKTKVEGE (91 aa)). One can recognise a B12-binding domain in the interval 94-218 (TGLAITFVAE…AAKVALNIMK (125 aa)). Residue His107 coordinates methylcob(III)alamin.

This sequence belongs to the methylamine corrinoid protein family. In terms of assembly, can form a complex with MtmB.

It participates in one-carbon metabolism; methanogenesis from methylamine. In terms of biological role, acts as a methyl group carrier between MtmB and MtbA. This chain is Monomethylamine corrinoid protein 1 (mtmC1), found in Methanosarcina acetivorans (strain ATCC 35395 / DSM 2834 / JCM 12185 / C2A).